Consider the following 159-residue polypeptide: MSQVILDLQIASEQAQGLPEEKDFQRWLEGVLPQFQEVSEVTIRIVDEAESRDLNNTYRGKDKPTNVLSFPFEAPPEVELPLLGDLIICRQVVEREAVEQEKTVEEHWAHMVVHGSLHLLGYDHIEDSEAEEMEALETEIMQSMGYADPYLAEKDGLTE.

3 residues coordinate Zn(2+): His-114, His-118, and His-124.

The protein belongs to the endoribonuclease YbeY family. Requires Zn(2+) as cofactor.

It is found in the cytoplasm. Its function is as follows. Single strand-specific metallo-endoribonuclease involved in late-stage 70S ribosome quality control and in maturation of the 3' terminus of the 16S rRNA. This chain is Endoribonuclease YbeY, found in Pectobacterium atrosepticum (strain SCRI 1043 / ATCC BAA-672) (Erwinia carotovora subsp. atroseptica).